The chain runs to 248 residues: MRILIANDDGLDALGIQTLAKYLQREYAILVVAPDRNRSGASNSLTLSRPIQPVKVVEGQYRVDGTPTDCVNLALSGVIDGDVDLVVSGINHGANLGDDVIYSGTVAAAMEARHLGRPALAVSLVGNLHFDTAAKVIMQLLKDSHTLELPAGILLNINVPDVPYSELKGIQVTRLGYRHKAQAPISAQHPKGIPSFWIGALSEPHDVSEGTDFCAVSKGYVSITPIHTDMTCYEARSPLTKWTDTITL.

A divalent metal cation contacts are provided by Asp-8, Asp-9, Ser-39, and Asn-91.

Belongs to the SurE nucleotidase family. Requires a divalent metal cation as cofactor.

It localises to the cytoplasm. It carries out the reaction a ribonucleoside 5'-phosphate + H2O = a ribonucleoside + phosphate. In terms of biological role, nucleotidase that shows phosphatase activity on nucleoside 5'-monophosphates. The sequence is that of 5'-nucleotidase SurE from Marinomonas sp. (strain MWYL1).